The chain runs to 205 residues: Thiamine-phosphate synthase (205 aa).

4-amino-2-methyl-5-(diphosphooxymethyl)pyrimidine contacts are provided by residues 37 to 41 (QVREK) and Asn-69. Residues Asp-70 and Asp-89 each contribute to the Mg(2+) site. Ser-108 contacts 4-amino-2-methyl-5-(diphosphooxymethyl)pyrimidine. A 2-[(2R,5Z)-2-carboxy-4-methylthiazol-5(2H)-ylidene]ethyl phosphate-binding site is contributed by 134–136 (TGS). Lys-137 serves as a coordination point for 4-amino-2-methyl-5-(diphosphooxymethyl)pyrimidine. Residues Gly-165 and 185–186 (IS) contribute to the 2-[(2R,5Z)-2-carboxy-4-methylthiazol-5(2H)-ylidene]ethyl phosphate site.

The protein belongs to the thiamine-phosphate synthase family. The cofactor is Mg(2+).

The catalysed reaction is 2-[(2R,5Z)-2-carboxy-4-methylthiazol-5(2H)-ylidene]ethyl phosphate + 4-amino-2-methyl-5-(diphosphooxymethyl)pyrimidine + 2 H(+) = thiamine phosphate + CO2 + diphosphate. It catalyses the reaction 2-(2-carboxy-4-methylthiazol-5-yl)ethyl phosphate + 4-amino-2-methyl-5-(diphosphooxymethyl)pyrimidine + 2 H(+) = thiamine phosphate + CO2 + diphosphate. It carries out the reaction 4-methyl-5-(2-phosphooxyethyl)-thiazole + 4-amino-2-methyl-5-(diphosphooxymethyl)pyrimidine + H(+) = thiamine phosphate + diphosphate. It functions in the pathway cofactor biosynthesis; thiamine diphosphate biosynthesis; thiamine phosphate from 4-amino-2-methyl-5-diphosphomethylpyrimidine and 4-methyl-5-(2-phosphoethyl)-thiazole: step 1/1. In terms of biological role, condenses 4-methyl-5-(beta-hydroxyethyl)thiazole monophosphate (THZ-P) and 2-methyl-4-amino-5-hydroxymethyl pyrimidine pyrophosphate (HMP-PP) to form thiamine monophosphate (TMP). This is Thiamine-phosphate synthase from Clostridium botulinum (strain ATCC 19397 / Type A).